The sequence spans 476 residues: Cytosolic Fe-S cluster assembly factor narfl (476 aa).

Residues C24, C71, C74, C77, C190, C246, C395, and C399 each contribute to the [4Fe-4S] cluster site.

It belongs to the NARF family. In terms of assembly, component of the CIA complex.

Functionally, component of the cytosolic iron-sulfur protein assembly (CIA) complex, a multiprotein complex that mediates the incorporation of iron-sulfur cluster into extramitochondrial Fe/S proteins. This is Cytosolic Fe-S cluster assembly factor narfl (narfl) from Xenopus tropicalis (Western clawed frog).